A 185-amino-acid polypeptide reads, in one-letter code: Ribosome-recycling factor (185 aa).

This sequence belongs to the RRF family.

It is found in the cytoplasm. In terms of biological role, responsible for the release of ribosomes from messenger RNA at the termination of protein biosynthesis. May increase the efficiency of translation by recycling ribosomes from one round of translation to another. The sequence is that of Ribosome-recycling factor from Dehalococcoides mccartyi (strain ATCC BAA-2266 / KCTC 15142 / 195) (Dehalococcoides ethenogenes (strain 195)).